We begin with the raw amino-acid sequence, 329 residues long: Small ribosomal subunit protein RACK1 (329 aa).

WD repeat units follow at residues 19–59 (GHNG…ATSP), 68–107 (GHSHFVQDVVISHDGQFALSGSWDNTLRLWDITKGVSTRL), 110–149 (GHTQDVMSVAFSSDNRQIISGSRDATIKVWNTLGECKFTL), 154–193 (AHQDWVSCIRFSPNTPTIVSGSWDNKVKIWDIKSFKCNHT), 196–235 (DHTGYVNTVTISPDGSLCASGGKDTFACLWELSSGKPLYK), 237–275 (EARNTINALAFSPNKYWLSAATDDKIIIWDLLTKQVLAE), and 295–328 (PKAPACLSLAWSADGSVLYAGYNDGLIRVYKSSS).

Belongs to the WD repeat G protein beta family. Ribosomal protein RACK1 subfamily.

The protein is Small ribosomal subunit protein RACK1 (gpbB) of Dictyostelium discoideum (Social amoeba).